We begin with the raw amino-acid sequence, 434 residues long: GTPase Obg (434 aa).

Positions 1–158 (MFLDTAKIKV…RELQLELKIL (158 aa)) constitute an Obg domain. An OBG-type G domain is found at 159 to 336 (ADVGLVGFPS…LLDATAELLD (178 aa)). Residues 165–172 (GFPSVGKS), 190–194 (FTTIV), 212–215 (DLPG), 282–285 (NKMD), and 317–319 (SGL) each bind GTP. Ser-172 and Thr-192 together coordinate Mg(2+). The OCT domain maps to 356 to 434 (GFDEEEKAFE…IGKFEFEFVD (79 aa)).

Belongs to the TRAFAC class OBG-HflX-like GTPase superfamily. OBG GTPase family. As to quaternary structure, monomer. Mg(2+) is required as a cofactor.

The protein resides in the cytoplasm. An essential GTPase which binds GTP, GDP and possibly (p)ppGpp with moderate affinity, with high nucleotide exchange rates and a fairly low GTP hydrolysis rate. Plays a role in control of the cell cycle, stress response, ribosome biogenesis and in those bacteria that undergo differentiation, in morphogenesis control. This Streptococcus pneumoniae (strain Hungary19A-6) protein is GTPase Obg.